Here is a 311-residue protein sequence, read N- to C-terminus: tRNA dimethylallyltransferase (311 aa).

19-26 contacts ATP; the sequence is GPSGSGKS. A substrate-binding site is contributed by 21-26; sequence SGSGKS. Positions 44 to 47 are interaction with substrate tRNA; it reads DSLS.

It belongs to the IPP transferase family. Monomer. Mg(2+) is required as a cofactor.

The catalysed reaction is adenosine(37) in tRNA + dimethylallyl diphosphate = N(6)-dimethylallyladenosine(37) in tRNA + diphosphate. Its function is as follows. Catalyzes the transfer of a dimethylallyl group onto the adenine at position 37 in tRNAs that read codons beginning with uridine, leading to the formation of N6-(dimethylallyl)adenosine (i(6)A). This is tRNA dimethylallyltransferase from Helicobacter pylori (strain ATCC 700392 / 26695) (Campylobacter pylori).